The primary structure comprises 500 residues: uncharacterized protein (500 aa).

The signal sequence occupies residues 1 to 20 (MHSIIFKAAVALLGVSTAAG). Asn43 carries N-linked (GlcNAc...) asparagine glycosylation. One can recognise an FAD-binding PCMH-type domain in the interval 60–232 (TALRPDCIIA…TAFTVKTHTQ (173 aa)). A Pros-8alpha-FAD histidine modification is found at His98. N-linked (GlcNAc...) asparagine glycans are attached at residues Asn194, Asn201, Asn246, Asn299, and Asn414.

It belongs to the oxygen-dependent FAD-linked oxidoreductase family. Requires FAD as cofactor.

The protein resides in the secreted. This is an uncharacterized protein from Arthroderma benhamiae (strain ATCC MYA-4681 / CBS 112371) (Trichophyton mentagrophytes).